A 429-amino-acid polypeptide reads, in one-letter code: Ribosomal RNA small subunit methyltransferase B (429 aa).

S-adenosyl-L-methionine-binding positions include 254-260 (CAAPGGK), aspartate 277, aspartate 303, and aspartate 322. The Nucleophile role is filled by cysteine 375.

The protein belongs to the class I-like SAM-binding methyltransferase superfamily. RsmB/NOP family.

It localises to the cytoplasm. It carries out the reaction cytidine(967) in 16S rRNA + S-adenosyl-L-methionine = 5-methylcytidine(967) in 16S rRNA + S-adenosyl-L-homocysteine + H(+). Functionally, specifically methylates the cytosine at position 967 (m5C967) of 16S rRNA. The polypeptide is Ribosomal RNA small subunit methyltransferase B (Shigella boydii serotype 18 (strain CDC 3083-94 / BS512)).